The sequence spans 138 residues: Small ribosomal subunit protein uS11c (138 aa).

The protein belongs to the universal ribosomal protein uS11 family. Part of the 30S ribosomal subunit.

The protein resides in the plastid. The protein localises to the chloroplast. The protein is Small ribosomal subunit protein uS11c of Nandina domestica (Heavenly bamboo).